The following is a 224-amino-acid chain: Haloacetate dehalogenase H-2 (224 aa).

D10 functions as the Nucleophile in the catalytic mechanism.

Belongs to the HAD-like hydrolase superfamily. S-2-haloalkanoic acid dehalogenase family.

It catalyses the reaction a haloacetate + H2O = a halide anion + glycolate + H(+). The chain is Haloacetate dehalogenase H-2 (dehH2) from Moraxella sp. (strain B).